A 313-amino-acid polypeptide reads, in one-letter code: Olfactory receptor 2B6 (313 aa).

Topologically, residues 1-25 (MNWVNDSIIQEFILLGFSDRPWLEF) are extracellular. Asparagine 5 carries N-linked (GlcNAc...) asparagine glycosylation. Residues 26–49 (PLLVVFLISYTVTIFGNLTIILVS) traverse the membrane as a helical segment. Residues 50–57 (RLDTKLHT) lie on the Cytoplasmic side of the membrane. The helical transmembrane segment at 58 to 79 (PMYFFLTNLSLLDLCYTTCTVP) threads the bilayer. At 80–100 (QMLVNLCSIRKVISYRGCVAQ) the chain is on the extracellular side. A disulfide bond links cysteine 97 and cysteine 189. The chain crosses the membrane as a helical span at residues 101-120 (LFIFLALGATEYLLLAVMSF). At 121–139 (DRFVAICRPLHYSVIMHQR) the chain is on the cytoplasmic side. The helical transmembrane segment at 140–158 (LCLQLAAASWVTGFSNSVW) threads the bilayer. The Extracellular portion of the chain corresponds to 159 to 195 (LSTLTLQLPLCDPYVIDHFLCEVPALLKLSCVETTAN). A helical membrane pass occupies residues 196–219 (EAELFLVSELFHLIPLTLILISYA). Over 220-236 (FIVRAVLRIQSAEGRQK) the chain is Cytoplasmic. The helical transmembrane segment at 237 to 259 (AFGTCGSHLIVVSLFYSTAVSVY) threads the bilayer. At 260 to 272 (LQPPSPSSKDQGK) the chain is on the extracellular side. Residues 273-292 (MVSLFYGIIAPMLNPLIYTL) form a helical membrane-spanning segment. Over 293 to 313 (RNKEVKEGFKRLVARVFLIKK) the chain is Cytoplasmic.

The protein belongs to the G-protein coupled receptor 1 family.

It localises to the cell membrane. Odorant receptor. The protein is Olfactory receptor 2B6 of Homo sapiens (Human).